A 1219-amino-acid chain; its full sequence is Pheromone-regulated membrane protein 10 (1219 aa).

The span at Met-1–Ala-11 shows a compositional bias: basic and acidic residues. Disordered regions lie at residues Met-1 to Glu-273, Leu-303 to Thr-490, His-503 to Val-533, and Glu-555 to Lys-713. The span at Asp-42–Glu-53 shows a compositional bias: acidic residues. Over residues Ser-57–Val-68 the composition is skewed to low complexity. Residues Leu-104–Pro-115 are compositionally biased toward polar residues. Over residues Gly-136–Gly-155 the composition is skewed to low complexity. Acidic residues-rich tracts occupy residues Thr-159–Val-171 and Gln-219–Gly-231. 3 stretches are compositionally biased toward basic and acidic residues: residues Ala-259 to Glu-273, Asp-330 to Asn-346, and Leu-395 to Arg-421. The span at Gln-422–His-432 shows a compositional bias: basic residues. Residues Glu-435–Phe-446 are compositionally biased toward polar residues. Positions Glu-448–Asn-470 are enriched in basic and acidic residues. Low complexity predominate over residues Thr-565 to Ser-577. Over residues Lys-598–Glu-615 the composition is skewed to basic residues. Positions Leu-616–Arg-641 are enriched in basic and acidic residues. Positions Ser-642–Ala-652 are enriched in low complexity. Residues Pro-653–Arg-673 are compositionally biased toward basic residues. A compositionally biased stretch (basic and acidic residues) spans Gly-693–Lys-713. 10 consecutive transmembrane segments (helical) span residues Pro-864 to Phe-884, Trp-888 to Val-908, Val-918 to Ser-938, Phe-945 to Leu-965, Met-983 to Val-1003, Leu-1021 to Asn-1041, Pro-1049 to Ile-1069, Ser-1075 to Ser-1095, Gly-1100 to Ser-1120, and Leu-1184 to Leu-1204.

The protein belongs to the ThrE exporter (TC 2.A.79) family.

The protein resides in the membrane. The protein is Pheromone-regulated membrane protein 10 of Yarrowia lipolytica (strain CLIB 122 / E 150) (Yeast).